A 116-amino-acid chain; its full sequence is Ribonuclease P protein component (116 aa).

This sequence belongs to the RnpA family. Consists of a catalytic RNA component (M1 or rnpB) and a protein subunit.

It carries out the reaction Endonucleolytic cleavage of RNA, removing 5'-extranucleotides from tRNA precursor.. In terms of biological role, RNaseP catalyzes the removal of the 5'-leader sequence from pre-tRNA to produce the mature 5'-terminus. It can also cleave other RNA substrates such as 4.5S RNA. The protein component plays an auxiliary but essential role in vivo by binding to the 5'-leader sequence and broadening the substrate specificity of the ribozyme. This is Ribonuclease P protein component from Pseudanabaena sp. (strain PCC 6903).